A 202-amino-acid chain; its full sequence is LexA repressor (202 aa).

Positions 29–49 form a DNA-binding region, H-T-H motif; that stretch reads VREICTAVGLKSTSTVHSYLE. Active-site for autocatalytic cleavage activity residues include Ser125 and Lys162.

The protein belongs to the peptidase S24 family. Homodimer.

The catalysed reaction is Hydrolysis of Ala-|-Gly bond in repressor LexA.. Functionally, represses a number of genes involved in the response to DNA damage (SOS response), including recA and lexA. In the presence of single-stranded DNA, RecA interacts with LexA causing an autocatalytic cleavage which disrupts the DNA-binding part of LexA, leading to derepression of the SOS regulon and eventually DNA repair. In Clostridium kluyveri (strain NBRC 12016), this protein is LexA repressor.